Here is an 857-residue protein sequence, read N- to C-terminus: MSNLMYNKMWHQTQEALNSLLDKEFQKMSEPQANKVLVFQMLATFYINYVQIFRNMENVYDQIVHPQKRMLIRKVLDGVMGRILELKNEMVELEMTEFHYFDDILQDLKLSPQQLDVPIPRYFLKERLEVIKGREKILARILTECGLNLPVKYAAKSIALEEAVKLIQIAERARQGRLRALFMKQIFLQECRAKEMKLLGHRLLDTKLAALQIQKVWRGFHQCKKTVKEREEEMVFLGMKPSPLFNEVSDAIVQSKQVTNLRDEVQLKHEQDYQEALVNIKEDLKMLEGPDIKEHLQDQIRQWFIECRNLTGTFPDYPNEEDGGSALIFSNKTPEQVMGDIIATQEEEEKLKKKKKKEDKENKGKKGKKEKKEKKEKKVSLKEKAMKDEDEEWKMSPSLFLQLMEEGNSLYKDIWLNKDESWNFPQDYDPELIKEEKRKELEMEIRVQVDELMRQELKNLKLAVNREMEIPPRQKKGKKEQTIVFPREVFGNPRVALVSLHIRALWGISYLSFNNGTIESLYQELVEKGLLIQALKVNLSDYIGEYSYLGTTLRQVAIEPMPSLLDVRQLITLYGILPLGSAEVHERAPLVKSLLLAGPSGVGKKMLVHAICTETGANLFNLSALNIAGKYPGKTGLQMMIHLVFKVARQLQPSVVWIQDTEKTFYKKVPQAEKRFEPKRLKRYLPKLLKLLKPDDRILIVGTTHRPFDAELQPFCRVYQKIILVPRPDYASRYGKFHEVLWKEIILRNGGKLTNSLNISCLSKVTDGFTQGQIVQVIKDVLTERRLRQQAHKPLTAIEFITMMTNMNPVYREEEESFKNWYAKTPLGKKRVLSLTVGNKEKEKDKGKKGKRGKKKK.

The 30-residue stretch at 206-235 (TKLAALQIQKVWRGFHQCKKTVKEREEEMV) folds into the IQ domain. The segment at 348–388 (EEKLKKKKKKEDKENKGKKGKKEKKEKKEKKVSLKEKAMKD) is disordered. Residues 365-375 (KKGKKEKKEKK) show a composition bias toward basic residues. The segment covering 376 to 387 (EKKVSLKEKAMK) has biased composition (basic and acidic residues). 598–605 (GPSGVGKK) is a binding site for ATP. Positions 834 to 857 (SLTVGNKEKEKDKGKKGKRGKKKK) are disordered. Basic residues predominate over residues 847–857 (GKKGKRGKKKK).

The protein belongs to the AAA ATPase family. DRC11 subfamily. Component of the nexin-dynein regulatory complex (N-DRC).

The protein resides in the cytoplasm. It is found in the cytoskeleton. Its subcellular location is the flagellum axoneme. In terms of biological role, component of the nexin-dynein regulatory complex (N-DRC), a key regulator of ciliary/flagellar motility which maintains the alignment and integrity of the distal axoneme and regulates microtubule sliding in motile axonemes. The polypeptide is Dynein regulatory complex protein 11 (Iqca1) (Mus musculus (Mouse)).